The sequence spans 299 residues: Tyrosine recombinase XerC (299 aa).

One can recognise a Core-binding (CB) domain in the interval 1–85 (MKRQLEAYCA…AVRGLYRYLN (85 aa)). Residues 106 to 285 (RLPKVLDTDR…DFQHLAAVYD (180 aa)) enclose the Tyr recombinase domain. Residues arginine 146, lysine 170, histidine 237, arginine 240, and histidine 263 contribute to the active site. Tyrosine 272 serves as the catalytic O-(3'-phospho-DNA)-tyrosine intermediate.

The protein belongs to the 'phage' integrase family. XerC subfamily. Forms a cyclic heterotetrameric complex composed of two molecules of XerC and two molecules of XerD.

Its subcellular location is the cytoplasm. Its function is as follows. Site-specific tyrosine recombinase, which acts by catalyzing the cutting and rejoining of the recombining DNA molecules. The XerC-XerD complex is essential to convert dimers of the bacterial chromosome into monomers to permit their segregation at cell division. It also contributes to the segregational stability of plasmids. In Pseudomonas putida (strain ATCC 700007 / DSM 6899 / JCM 31910 / BCRC 17059 / LMG 24140 / F1), this protein is Tyrosine recombinase XerC.